The chain runs to 273 residues: Proteasome subunit beta (273 aa).

The segment covering 1-19 (MQESTANKVAANATSSFTE) has biased composition (polar residues). The tract at residues 1 to 23 (MQESTANKVAANATSSFTEHLQR) is disordered. Residues 1-50 (MQESTANKVAANATSSFTEHLQRDRPELLPFNRSGQGSATAAAPLQVPHA) constitute a propeptide, removed in mature form; by autocatalysis. Thr-51 acts as the Nucleophile in catalysis.

Belongs to the peptidase T1B family. The 20S proteasome core is composed of 14 alpha and 14 beta subunits that assemble into four stacked heptameric rings, resulting in a barrel-shaped structure. The two inner rings, each composed of seven catalytic beta subunits, are sandwiched by two outer rings, each composed of seven alpha subunits. The catalytic chamber with the active sites is on the inside of the barrel. Has a gated structure, the ends of the cylinder being occluded by the N-termini of the alpha-subunits. Is capped by the proteasome-associated ATPase, ARC.

The protein resides in the cytoplasm. The enzyme catalyses Cleavage of peptide bonds with very broad specificity.. It functions in the pathway protein degradation; proteasomal Pup-dependent pathway. The formation of the proteasomal ATPase ARC-20S proteasome complex, likely via the docking of the C-termini of ARC into the intersubunit pockets in the alpha-rings, may trigger opening of the gate for substrate entry. Interconversion between the open-gate and close-gate conformations leads to a dynamic regulation of the 20S proteasome proteolysis activity. Its function is as follows. Component of the proteasome core, a large protease complex with broad specificity involved in protein degradation. In Pseudarthrobacter chlorophenolicus (strain ATCC 700700 / DSM 12829 / CIP 107037 / JCM 12360 / KCTC 9906 / NCIMB 13794 / A6) (Arthrobacter chlorophenolicus), this protein is Proteasome subunit beta.